We begin with the raw amino-acid sequence, 217 residues long: MHTVKLLCVVFSCLCAIGWASHHSHRQPCHSPQLTSGTMKVVSTGGHDLASGEFSYDSKTNKFRFVEDTTHANKTSYMDVLIHFEEGVLYEIDSKNESCKKETLQFRKHLMEIPVDATHESESYMGSPSLTEQGLRVRVWNGKFPELHAHYSLSTTSCGCLTVSGSYYGEKKDLFFSFFGVETEVDDLQVFAPPAYCEGVSFEEAPDDHSFFDLFHD.

Residues 1 to 20 form the signal peptide; that stretch reads MHTVKLLCVVFSCLCAIGWA. 2 N-linked (GlcNAc...) asparagine glycosylation sites follow: Asn73 and Asn96.

The protein belongs to the ependymin family. As to quaternary structure, forms disulfide-linked dimers. Binds calcium through the terminal sialic acids. As to expression, EPDs are synthesized in the meninx and secreted in the cerebrospinal fluid.

It localises to the secreted. In terms of biological role, may play a role in neural plasticity. May be involved during axon regeneration. This chain is Ependymin (epd), found in Danio rerio (Zebrafish).